Reading from the N-terminus, the 109-residue chain is UPF0235 protein MA_4097 (109 aa).

Belongs to the UPF0235 family.

This Methanosarcina acetivorans (strain ATCC 35395 / DSM 2834 / JCM 12185 / C2A) protein is UPF0235 protein MA_4097.